We begin with the raw amino-acid sequence, 337 residues long: Trace amine-associated receptor 5 (337 aa).

Topologically, residues M1–Y38 are extracellular. N21 carries an N-linked (GlcNAc...) asparagine glycan. Intrachain disulfides connect C24–C188 and C99–C192. The chain crosses the membrane as a helical span at residues L39–V59. Residues S60–N70 are Cytoplasmic-facing. The helical transmembrane segment at F71–S91 threads the bilayer. Residues T92–L109 are Extracellular-facing. A helical transmembrane segment spans residues H110–I130. Over D131–Y154 the chain is Cytoplasmic. Residues I155 to V175 traverse the membrane as a helical segment. The segment at E176–V189 is extracellular Loop 2 (ECL2). Residues E176–N204 are Extracellular-facing. The chain crosses the membrane as a helical span at residues F205–V225. At A226 to T253 the chain is on the cytoplasmic side. A helical membrane pass occupies residues L254–V274. The Extracellular portion of the chain corresponds to D275–P284. The chain crosses the membrane as a helical span at residues L285 to F307. Topologically, residues S308 to D337 are cytoplasmic.

This sequence belongs to the G-protein coupled receptor 1 family. Specifically expressed in neurons of the olfactory epithelium, to discrete glomeruli predominantly localized to a confined bulb region. Present in the dorsal area of the main olfactory epithelium. Also present in the limbic brain areas receiving projection from the olfactory system and involved in the regulation of emotions. Also expressed in some brain regions outside the olfactory epithelium, such as the hippocampus, cerebellum, cortex, raphe nuclei, hypothalamus, and habenula.

It localises to the cell membrane. Inhibited by 1-[(5,5- diphenyloxolan-2-yl)methyl]-4-(2-methoxyphenyl)piperazine and N-[(2,2-diphenyl-1,3-dioxolan-4-yl)methyl]-2-(2- methoxyphenoxy)ethan-1-amine small molecules. Functionally, olfactory receptor specific for trimethylamine, a trace amine enriched in the urine of male mice, playing a role in social behavior. Also activated by N-methylpiperidine. Trimethylamine is present at high concentration in the urine of male mice after puberty and acts as an attractant. Trimethylamine-binding causes a conformation change that triggers signaling via G(s)-class of G alpha proteins (GNAL or GNAS). Also required to provide olfactory input into limbic brain areas to regulate emotional behaviors likely via modulation of the serotonin system. The chain is Trace amine-associated receptor 5 from Mus musculus (Mouse).